The chain runs to 336 residues: GTPase Obg (336 aa).

Residues 1-159 (MKFLDQAKIY…RWVWLRLKLI (159 aa)) form the Obg domain. Residues 160–328 (ADIGLVGLPN…LLRLLQDRVT (169 aa)) enclose the OBG-type G domain. GTP is bound by residues 166–173 (GLPNAGKS), 191–195 (FTTLH), 213–216 (DIPG), 280–283 (NKCD), and 309–311 (SGA). Mg(2+) is bound by residues S173 and T193.

This sequence belongs to the TRAFAC class OBG-HflX-like GTPase superfamily. OBG GTPase family. Monomer. It depends on Mg(2+) as a cofactor.

The protein resides in the cytoplasm. An essential GTPase which binds GTP, GDP and possibly (p)ppGpp with moderate affinity, with high nucleotide exchange rates and a fairly low GTP hydrolysis rate. Plays a role in control of the cell cycle, stress response, ribosome biogenesis and in those bacteria that undergo differentiation, in morphogenesis control. The chain is GTPase Obg from Gluconobacter oxydans (strain 621H) (Gluconobacter suboxydans).